A 452-amino-acid chain; its full sequence is tRNA modification GTPase MnmE (452 aa).

Residues Arg22, Glu79, and Lys119 each contribute to the (6S)-5-formyl-5,6,7,8-tetrahydrofolate site. A TrmE-type G domain is found at 215-375 (GMKVVIAGRP…LRQHLKQSMG (161 aa)). Asn225 lines the K(+) pocket. GTP contacts are provided by residues 225–230 (NAGKSS), 244–250 (TDIAGTT), 269–272 (DTAG), and 333–336 (NKAD). Ser229 contacts Mg(2+). K(+) contacts are provided by Thr244, Ile246, and Thr249. A Mg(2+)-binding site is contributed by Thr250. Lys452 is a (6S)-5-formyl-5,6,7,8-tetrahydrofolate binding site.

The protein belongs to the TRAFAC class TrmE-Era-EngA-EngB-Septin-like GTPase superfamily. TrmE GTPase family. Homodimer. Heterotetramer of two MnmE and two MnmG subunits. Requires K(+) as cofactor.

It is found in the cytoplasm. Its function is as follows. Exhibits a very high intrinsic GTPase hydrolysis rate. Involved in the addition of a carboxymethylaminomethyl (cmnm) group at the wobble position (U34) of certain tRNAs, forming tRNA-cmnm(5)s(2)U34. The chain is tRNA modification GTPase MnmE from Histophilus somni (strain 129Pt) (Haemophilus somnus).